The sequence spans 448 residues: Probable glycine dehydrogenase (decarboxylating) subunit 1 (448 aa).

Belongs to the GcvP family. N-terminal subunit subfamily. In terms of assembly, the glycine cleavage system is composed of four proteins: P, T, L and H. In this organism, the P 'protein' is a heterodimer of two subunits.

It catalyses the reaction N(6)-[(R)-lipoyl]-L-lysyl-[glycine-cleavage complex H protein] + glycine + H(+) = N(6)-[(R)-S(8)-aminomethyldihydrolipoyl]-L-lysyl-[glycine-cleavage complex H protein] + CO2. Its function is as follows. The glycine cleavage system catalyzes the degradation of glycine. The P protein binds the alpha-amino group of glycine through its pyridoxal phosphate cofactor; CO(2) is released and the remaining methylamine moiety is then transferred to the lipoamide cofactor of the H protein. The polypeptide is Probable glycine dehydrogenase (decarboxylating) subunit 1 (Listeria monocytogenes serovar 1/2a (strain ATCC BAA-679 / EGD-e)).